The primary structure comprises 142 residues: Large ribosomal subunit protein uL13 (142 aa).

The protein belongs to the universal ribosomal protein uL13 family. As to quaternary structure, part of the 50S ribosomal subunit.

This protein is one of the early assembly proteins of the 50S ribosomal subunit, although it is not seen to bind rRNA by itself. It is important during the early stages of 50S assembly. This Cronobacter sakazakii (strain ATCC BAA-894) (Enterobacter sakazakii) protein is Large ribosomal subunit protein uL13.